The primary structure comprises 160 residues: Transcription elongation factor GreA (160 aa).

Residues 1–71 (MAEKTYPMTL…GQISTLETKI (71 aa)) are a coiled coil.

Belongs to the GreA/GreB family.

Necessary for efficient RNA polymerase transcription elongation past template-encoded arresting sites. The arresting sites in DNA have the property of trapping a certain fraction of elongating RNA polymerases that pass through, resulting in locked ternary complexes. Cleavage of the nascent transcript by cleavage factors such as GreA or GreB allows the resumption of elongation from the new 3'terminus. GreA releases sequences of 2 to 3 nucleotides. This chain is Transcription elongation factor GreA, found in Streptococcus pyogenes serotype M3 (strain ATCC BAA-595 / MGAS315).